Consider the following 567-residue polypeptide: Urease subunit alpha (567 aa).

The Ni(2+) site is built by H134, H136, and K217. At K217 the chain carries N6-carboxylysine. H219 contacts substrate. Ni(2+)-binding residues include H246 and H272. H320 functions as the Proton donor in the catalytic mechanism. D360 is a binding site for Ni(2+).

This sequence belongs to the metallo-dependent hydrolases superfamily. Urease alpha subunit family. In terms of assembly, heterotrimer of UreA (gamma), UreB (beta) and UreC (alpha) subunits. Three heterotrimers associate to form the active enzyme. Ni cation serves as cofactor. In terms of processing, carboxylation allows a single lysine to coordinate two nickel ions.

It localises to the cytoplasm. It carries out the reaction urea + 2 H2O + H(+) = hydrogencarbonate + 2 NH4(+). It functions in the pathway nitrogen metabolism; urea degradation; CO(2) and NH(3) from urea (urease route): step 1/1. The chain is Urease subunit alpha from Pseudomonas putida (strain GB-1).